We begin with the raw amino-acid sequence, 330 residues long: Putative acetyltransferase ORF330 (330 aa).

A run of 10 helical transmembrane segments spans residues Gly29–Ser49, Ile50–Leu70, Ile90–His110, Leu118–Phe138, Phe163–Leu183, Leu190–Ile210, Ile225–Leu245, Val252–Val272, Leu273–Leu293, and Leu297–Leu317.

It localises to the host membrane. This chain is Putative acetyltransferase ORF330, found in Acidianus convivator (ATV).